Here is a 318-residue protein sequence, read N- to C-terminus: MKKKIAEYEVGEQVDLFLLIKTATKGIASNGKPFLTVILQDQSGDIEAKLWDVSPEVERQYTAETIVKVAGDIQNYKGRIQLRVKQIRVANPNEVTDISDFVEKAPVKKEDMVEKITQYIFEMRNPNIQRLTRHLLNKHQNDFLDYPAATKNHHEFVSGLAYHVVSMLDLAKAISTLYPSLDKDLLYAGVILHDLGKVIELSGPISTTYTLEGNLLGHISIMVNEIGKAAEELKIEGEEVLILQHIVLSHHGKAEWGSPKPPLVKEAEILHYIDNLDAKMNMMDRALGRTKPGEYTERVFALDNRSFYKPKFQTYYDK.

The HD domain maps to 163–279; that stretch reads HVVSMLDLAK…LHYIDNLDAK (117 aa).

Belongs to the YhaM family.

Its function is as follows. Shows a 3'-5' exoribonuclease activity. This is 3'-5' exoribonuclease YhaM from Bacillus cytotoxicus (strain DSM 22905 / CIP 110041 / 391-98 / NVH 391-98).